The sequence spans 268 residues: tRNA pseudouridine synthase A (268 aa).

The active-site Nucleophile is the Asp52. Tyr110 lines the substrate pocket.

The protein belongs to the tRNA pseudouridine synthase TruA family. In terms of assembly, homodimer.

The catalysed reaction is uridine(38/39/40) in tRNA = pseudouridine(38/39/40) in tRNA. Functionally, formation of pseudouridine at positions 38, 39 and 40 in the anticodon stem and loop of transfer RNAs. The chain is tRNA pseudouridine synthase A from Prochlorococcus marinus (strain MIT 9301).